The chain runs to 333 residues: Homeobox protein engrailed-2 (333 aa).

3 disordered regions span residues 1–49, 95–206, and 223–250; these read MEEN…RALM, GRGG…GANL, and SDRP…PRTA. Gly residues-rich tracts occupy residues 25-36 and 95-117; these read PGGGSGGGGGSS and GRGG…GAGG. Composition is skewed to low complexity over residues 142-151 and 191-200; these read PLPAAGSDSP and LSVSSDSDSS. The segment at residues 244 to 303 is a DNA-binding region (homeobox); that stretch reads DKRPRTAFTAEQLQRLKAEFQTNRYLTEQRRQSLAQELSLNESQIKIWFQNKRAKIKKAT.

The protein belongs to the engrailed homeobox family.

The protein localises to the nucleus. This chain is Homeobox protein engrailed-2 (EN2), found in Homo sapiens (Human).